We begin with the raw amino-acid sequence, 324 residues long: Glyoxylate/hydroxypyruvate reductase B (324 aa).

Active-site residues include Arg-237 and Glu-266. The Proton donor role is filled by His-285.

Belongs to the D-isomer specific 2-hydroxyacid dehydrogenase family. GhrB subfamily. Homodimer.

The protein resides in the cytoplasm. The enzyme catalyses glycolate + NADP(+) = glyoxylate + NADPH + H(+). It carries out the reaction (R)-glycerate + NAD(+) = 3-hydroxypyruvate + NADH + H(+). It catalyses the reaction (R)-glycerate + NADP(+) = 3-hydroxypyruvate + NADPH + H(+). Its function is as follows. Catalyzes the NADPH-dependent reduction of glyoxylate and hydroxypyruvate into glycolate and glycerate, respectively. This is Glyoxylate/hydroxypyruvate reductase B from Escherichia coli (strain SMS-3-5 / SECEC).